We begin with the raw amino-acid sequence, 553 residues long: Cytokine-like nuclear factor N-PAC (553 aa).

The PWWP domain occupies 8–66 (LGDLVWGKLGRYPPWPGKIVNPPKDLKKPRGKKCFFVKFFGTEDHAWIKVEQLKPYHLH). Composition is skewed to basic and acidic residues over residues 92–145 (KTKG…EGKK) and 162–182 (RAQD…KDLT). The disordered stretch occupies residues 92–188 (KTKGKDQASS…KDLTIPESST (97 aa)). The segment at residues 168 to 180 (PRKRGRPPKDEKD) is a DNA-binding region (a.T hook). An interaction with histone H3 region spans residues 214 to 217 (DPHF). The tract at residues 261–553 (GSITPTDKKI…MSAVYRAYIH (293 aa)) is dehydrogenase domain. NAD(+) is bound by residues 271–285 (GFLG…IVSN), T362, and K505.

This sequence belongs to the HIBADH-related family. NP60 subfamily. In terms of assembly, homotetramere. Binds to mononucleosomes.

The protein localises to the nucleus. It is found in the chromosome. In terms of biological role, cytokine-like nuclear factor with chromatin gene reader activity involved in chromatin modification and regulation of gene expression. Acts as a nucleosome-destabilizing factor that is recruited to genes during transcriptional activation. Recognizes and binds histone H3 without a preference for specific epigenetic markers and also binds DNA. Interacts with KDM1B and promotes its histone demethylase activity by facilitating the capture of H3 tails, they form a multifunctional enzyme complex that modifies transcribed chromatin and facilitates Pol II transcription through nucleosomes. The chain is Cytokine-like nuclear factor N-PAC (GLYR1) from Gallus gallus (Chicken).